A 266-amino-acid polypeptide reads, in one-letter code: 4-hydroxy-tetrahydrodipicolinate reductase (266 aa).

10–15 (GPRGRM) contacts NAD(+). K38 serves as a coordination point for NADP(+). NAD(+)-binding positions include 99–101 (GTT) and 125–128 (APNF). H155 acts as the Proton donor/acceptor in catalysis. Residue H156 participates in (S)-2,3,4,5-tetrahydrodipicolinate binding. Catalysis depends on K159, which acts as the Proton donor. 165–166 (GT) contributes to the (S)-2,3,4,5-tetrahydrodipicolinate binding site.

The protein belongs to the DapB family.

The protein localises to the cytoplasm. It carries out the reaction (S)-2,3,4,5-tetrahydrodipicolinate + NAD(+) + H2O = (2S,4S)-4-hydroxy-2,3,4,5-tetrahydrodipicolinate + NADH + H(+). It catalyses the reaction (S)-2,3,4,5-tetrahydrodipicolinate + NADP(+) + H2O = (2S,4S)-4-hydroxy-2,3,4,5-tetrahydrodipicolinate + NADPH + H(+). Its pathway is amino-acid biosynthesis; L-lysine biosynthesis via DAP pathway; (S)-tetrahydrodipicolinate from L-aspartate: step 4/4. Catalyzes the conversion of 4-hydroxy-tetrahydrodipicolinate (HTPA) to tetrahydrodipicolinate. This is 4-hydroxy-tetrahydrodipicolinate reductase from Bacillus anthracis (strain A0248).